The following is an 86-amino-acid chain: EMBRYO SURROUNDING FACTOR 1-like protein 2 (86 aa).

A signal peptide spans 1 to 21; the sequence is MKSHIAIICIIMLSFFSMHEY. Disulfide bonds link C39/C54, C44/C82, C52/C78, and C55/C65.

Belongs to the MEG family.

The sequence is that of EMBRYO SURROUNDING FACTOR 1-like protein 2 (ESFL2) from Arabidopsis thaliana (Mouse-ear cress).